We begin with the raw amino-acid sequence, 594 residues long: Transcription factor TFIIIB component B'' (594 aa).

The interval 1-169 (MSSIVNKSGT…ARRLSTISNK (169 aa)) is disordered. Serine 49 carries the phosphoserine modification. Residues 150 to 168 (LDSSSNSNGTARRLSTISN) show a composition bias toward polar residues. Position 178 is a phosphoserine (serine 178). Disordered regions lie at residues 217–245 (SPPT…DENE) and 317–343 (ARQE…KEER). Basic and acidic residues-rich tracts occupy residues 225–241 (SLDR…SREA) and 317–330 (ARQE…LTKE). The SANT domain occupies 415 to 466 (SYTDPWTVEEMIKFYKALSMWGTDFNLISQLYPYRSRKQVKAKFVNEEKKRP). Residues 520–529 (KNTAKEEDQT) are compositionally biased toward basic and acidic residues. Disordered regions lie at residues 520 to 547 (KNTA…GGIM) and 567 to 594 (LKRK…EIDQ). Residues 579 to 594 (DNEDNEGSEEEPEIDQ) show a composition bias toward acidic residues.

The protein belongs to the TFC5 family. As to quaternary structure, TFIIIB comprises the TATA-binding protein (TBP), the B-related factor (BRF) and the B'' component (BDP1). Interacts with TFC4.

It is found in the nucleus. In terms of biological role, general activator of RNA polymerase III transcription. This Saccharomyces cerevisiae (strain ATCC 204508 / S288c) (Baker's yeast) protein is Transcription factor TFIIIB component B'' (BDP1).